The sequence spans 208 residues: dITP/XTP pyrophosphatase (208 aa).

16-21 (SNNKGK) provides a ligand contact to substrate. The Proton acceptor role is filled by Asp79. Asp79 is a binding site for Mg(2+). Substrate-binding positions include Ser80, 166-169 (FGYD), Lys189, and 194-195 (HR).

Belongs to the HAM1 NTPase family. Homodimer. Mg(2+) is required as a cofactor.

It catalyses the reaction XTP + H2O = XMP + diphosphate + H(+). The enzyme catalyses dITP + H2O = dIMP + diphosphate + H(+). The catalysed reaction is ITP + H2O = IMP + diphosphate + H(+). In terms of biological role, pyrophosphatase that catalyzes the hydrolysis of nucleoside triphosphates to their monophosphate derivatives, with a high preference for the non-canonical purine nucleotides XTP (xanthosine triphosphate), dITP (deoxyinosine triphosphate) and ITP. Seems to function as a house-cleaning enzyme that removes non-canonical purine nucleotides from the nucleotide pool, thus preventing their incorporation into DNA/RNA and avoiding chromosomal lesions. This chain is dITP/XTP pyrophosphatase, found in Acinetobacter baumannii (strain AB307-0294).